Reading from the N-terminus, the 108-residue chain is Insulin (108 aa).

The N-terminal stretch at 1–21 (MAVWIQAGALLFLLAVSSVNA) is a signal peptide. Intrachain disulfides connect Cys-30-Cys-94, Cys-42-Cys-107, and Cys-93-Cys-98. A propeptide spans 54 to 85 (DVDPPLGFLPPKSAQETEVADFAFKDHAEVIR) (c peptide).

Belongs to the insulin family. In terms of assembly, heterodimer of a B chain and an A chain linked by two disulfide bonds.

It localises to the secreted. Insulin decreases blood glucose concentration. It increases cell permeability to monosaccharides, amino acids and fatty acids. It accelerates glycolysis, the pentose phosphate cycle, and glycogen synthesis in liver. This chain is Insulin (ins), found in Cyprinus carpio (Common carp).